The primary structure comprises 297 residues: Phosphoribosylaminoimidazole-succinocarboxamide synthase (297 aa).

This sequence belongs to the SAICAR synthetase family.

It carries out the reaction 5-amino-1-(5-phospho-D-ribosyl)imidazole-4-carboxylate + L-aspartate + ATP = (2S)-2-[5-amino-1-(5-phospho-beta-D-ribosyl)imidazole-4-carboxamido]succinate + ADP + phosphate + 2 H(+). The protein operates within purine metabolism; IMP biosynthesis via de novo pathway; 5-amino-1-(5-phospho-D-ribosyl)imidazole-4-carboxamide from 5-amino-1-(5-phospho-D-ribosyl)imidazole-4-carboxylate: step 1/2. In Corynebacterium glutamicum (strain ATCC 13032 / DSM 20300 / JCM 1318 / BCRC 11384 / CCUG 27702 / LMG 3730 / NBRC 12168 / NCIMB 10025 / NRRL B-2784 / 534), this protein is Phosphoribosylaminoimidazole-succinocarboxamide synthase.